We begin with the raw amino-acid sequence, 496 residues long: Sodium/sialic acid symporter SiaT (496 aa).

Residues 1-7 (MQLHDFG) are Periplasmic-facing. A helical membrane pass occupies residues 8–29 (FINYAVLFGYLAAMLLVGVYFS). Over 30–46 (KRQKTADDYFRGGGRVP) the chain is Cytoplasmic. The chain crosses the membrane as a helical span at residues 47–59 (GWAAGVSVFATTL). Position 56 (alanine 56) interacts with Na(+). Threonine 58 provides a ligand contact to N-acetyl-alpha-neuraminate. Leucine 59 is a Na(+) binding site. 3 residues coordinate N-acetyl-alpha-neuraminate: serine 60, threonine 63, and glutamine 82. Residues 60–76 (SSITFMSIPAKAYTSDW) are Periplasmic-facing. A helical transmembrane segment spans residues 77–92 (TFIIGQYLAIAILPLV). Topologically, residues 93–116 (FYFYIPFFRKLKITSAYEYLEARF) are cytoplasmic. Residues 117–144 (DVRSRLFASLSFMLFHIGRVAIITYLTV) form a helical membrane-spanning segment. Arginine 135 serves as a coordination point for N-acetyl-alpha-neuraminate. Topologically, residues 145-154 (LALRPFMGID) are periplasmic. Residues 155 to 172 (PVVLIVLISLLCIIYTWM) form a helical membrane-spanning segment. Topologically, residues 173 to 174 (GG) are cytoplasmic. A helical transmembrane segment spans residues 175 to 199 (IEGVIWTDVIQGLLLSGGAVLIFIM). Aspartate 182 contributes to the Na(+) binding site. At 200–235 (ICFKVDGGISEIFTTTAQADKFFPTTQWRWSWTDST) the chain is on the periplasmic side. Residues 236–252 (IPVLMIGFLFANIQQFT) traverse the membrane as a helical segment. Over 253–272 (ASQDVVQRYIVTDSIKETKR) the chain is Cytoplasmic. Residues 273 to 292 (TLITNAKLVAIIPIFFFAIG) traverse the membrane as a helical segment. Residues 293 to 325 (SALFVYYQQNPSLLPAGFNTGGILPLFIVTEMP) are Periplasmic-facing. Residues 326 to 356 (IGIAGLIIAAIFAAAQSSISSSLNSISSCFN) traverse the membrane as a helical segment. Positions 339, 342, 343, 345, and 346 each coordinate Na(+). Over 357-374 (SDIYTRLSKSSPSPEQKM) the chain is Cytoplasmic. Residues 375–396 (KVAKLVIIVAGIFSSLAAIWLV) form a helical membrane-spanning segment. Topologically, residues 397 to 403 (LSDEAEI) are periplasmic. The helical transmembrane segment at 404–427 (WDAFNSLIGLMGGPMTGLFMLGIF) threads the bilayer. Residues 428-432 (VKRAN) are Cytoplasmic-facing. The helical transmembrane segment at 433 to 453 (AGSAVVGIIVSIIAVLAARYG) threads the bilayer. At 454-457 (SDLN) the chain is on the periplasmic side. Residues 458-479 (FFFYGVIGSMSVVIAGTITAPL) form a helical membrane-spanning segment. The Cytoplasmic segment spans residues 480–496 (FAPAKQLSLDDSETSEN).

This sequence belongs to the sodium:solute symporter (SSF) (TC 2.A.21) family.

It is found in the cell inner membrane. The catalysed reaction is N-acetyl-alpha-neuraminate(out) + 2 Na(+)(out) = N-acetyl-alpha-neuraminate(in) + 2 Na(+)(in). With respect to regulation, both Na(+) sites regulate Neu5Ac transport. The binding energy of the second Na(+) ion may be used to allosterically stabilize the substrate without directly coordinating it. In the absence of external Na(+), the rate is reduced by 78%. In terms of biological role, symporter that uses the Na(+) gradient as the driving force for the uptake of the sialic acid N-acetylneuraminic acid (Neu5Ac). It allows the use of host-derived Neu5Ac as an energy source by P.mirabilis. Also binds N-glycolylneuraminic acid (Neu5Gc) and ketodeoxynonulosonic acid (KDN). Shows the highest affinity for Neu5Ac and Neu5Gc, which commonly occupy the terminal non-reducing position of mammalian cell surface glycoconjugates. The chain is Sodium/sialic acid symporter SiaT from Proteus mirabilis (strain HI4320).